We begin with the raw amino-acid sequence, 33 residues long: Rhinophrynin-33 (33 aa).

In terms of tissue distribution, expressed by the skin glands.

It localises to the secreted. Functionally, non-cytotoxic peptide with immunosuppressive and insulinotropic effects. Induces an increased production of the anti-inflammatory cytokine IL-10 and inhibits production of the pro-inflammatory cytokines TNF-alpha and IL-1beta, when incubated with mouse peritoneal cells. Does not display growth-inhibitory activity against the Gram-positive S.epidermidis and Gram-negative E.coli bacteria and against the opportunistic yeast pathogen C.parapsilosis (MIC&gt;128 uM). In addition, it lacks cytotoxic activity against mouse erythrocytes (LC(50)&gt;500 uM) and A549 human non-small cell lung adenocarcinoma cells (LC(50)&gt;100 uM). Moderately stimulates insulin release from rat clonal beta-cells and mouse pancreatic islets. Its function is as follows. Non-cytotoxic peptide with immunosuppressive but without insulinotropic effects. Inhibits production of the pro-inflammatory cytokines TNF-alpha, but has no effect on IL-10 and IL-1beta production, when incubated with mouse peritoneal cells. Has no activity of stimulation of insulin release. This Rhinophrynus dorsalis (Mexican burrowing toad) protein is Rhinophrynin-33.